We begin with the raw amino-acid sequence, 269 residues long: Hydroxyethylthiazole kinase (269 aa).

Residue M42 participates in substrate binding. The ATP site is built by R118 and S164. G191 is a binding site for substrate.

It belongs to the Thz kinase family. Mg(2+) serves as cofactor.

The catalysed reaction is 5-(2-hydroxyethyl)-4-methylthiazole + ATP = 4-methyl-5-(2-phosphooxyethyl)-thiazole + ADP + H(+). The protein operates within cofactor biosynthesis; thiamine diphosphate biosynthesis; 4-methyl-5-(2-phosphoethyl)-thiazole from 5-(2-hydroxyethyl)-4-methylthiazole: step 1/1. In terms of biological role, catalyzes the phosphorylation of the hydroxyl group of 4-methyl-5-beta-hydroxyethylthiazole (THZ). The sequence is that of Hydroxyethylthiazole kinase from Listeria monocytogenes serotype 4a (strain HCC23).